Consider the following 143-residue polypeptide: MYTCAKFVSTPSLIRRTSTLLSRSLSAVVVRRPETLTDESHSSLAVVPRPLTTSLTPSRSFQTSAISRDIDTAAKFIGAGAATVGVAGSGAGIGTVFGSLIIGYARNPSLKQQLFSYAILGFALSEAMGLFCLMVAFLILFAM.

The transit peptide at 1–68 directs the protein to the mitochondrion; that stretch reads MYTCAKFVST…RSFQTSAISR (68 aa). A helical transmembrane segment spans residues 84 to 104; sequence VGVAGSGAGIGTVFGSLIIGY. At Lys-111 the chain carries N6,N6,N6-trimethyllysine. A helical membrane pass occupies residues 119 to 139; sequence ILGFALSEAMGLFCLMVAFLI.

It belongs to the ATPase C chain family. As to quaternary structure, F-type ATPases have 2 components, CF(1) - the catalytic core - and CF(0) - the membrane proton channel. CF(1) has five subunits: alpha(3), beta(3), gamma(1), delta(1), epsilon(1). CF(0) has three main subunits: a, b and c. Interacts with DNAJC30; interaction is direct. Trimethylated by ATPSCKMT at Lys-111. Methylation is required for proper incorporation of the C subunit into the ATP synthase complex and mitochondrial respiration.

The protein resides in the mitochondrion membrane. Its function is as follows. Mitochondrial membrane ATP synthase (F(1)F(0) ATP synthase or Complex V) produces ATP from ADP in the presence of a proton gradient across the membrane which is generated by electron transport complexes of the respiratory chain. F-type ATPases consist of two structural domains, F(1) - containing the extramembraneous catalytic core and F(0) - containing the membrane proton channel, linked together by a central stalk and a peripheral stalk. During catalysis, ATP synthesis in the catalytic domain of F(1) is coupled via a rotary mechanism of the central stalk subunits to proton translocation. Part of the complex F(0) domain. A homomeric c-ring of probably 10 subunits is part of the complex rotary element. The protein is ATP synthase F(0) complex subunit C2, mitochondrial of Ovis aries (Sheep).